Reading from the N-terminus, the 1032-residue chain is MRPGDIYPPPQGYNAYGSPTRQNQRPPQPQPYPPQPYPPQQPAVQYGDPFSASSQGPPTAPLHNMSPTPQEPQGSRYNASHPLQPISPSGPQGPRYSLPTQSLSPFNGSPASAPAPAPYTMGSPSHSNARMHASPPQHIRFDTNPSHLPPQQQLTPSYSYPSGLDDRLTSPPPLLPHHSSQSSVSSIPAPVPDNINYNPSYPPQGYGNAADDDMNDSHPLLAHAAPDARFGIPQSTSAMSMSAPAARYQLSDTGAGDMGVSMYTGNGNAEGQNGFGTGDGVGANGEDEVNMHYGPIPARMVRRNRTQKRVQLFQGHLVLDIEVPTMLLDQCPIRQGNEFTKMRYTAVTCDPNDFVEDRYTLRQRLYDPPRQTELFIVITMYNEDDVLFCRTMRGVMQNIAHLCTRSKSKTWGENGWKKVVVCIVADGRKKINPRTRSVLAALGVYQEGVGKNIINGKPVTAHVYEYTTQLSINSSGKIGPGGSNTVPIQMLFCLKEKNQKKINSHRWFFNAFGACLRPNVCVLLDVGTQPGPDSIYHLWKAFDINSSVGGACGEIVALKGMFWKNLLNPLVAAQNFEYKMSNILDKPLESVFGYITVLPGAFSAYRYIALLNDEKGNGPLKQYFVGERMHGSGAGIFSSNMYLAEDRILCWELVSKRECKWKLHYVKSAYAITDVPDTVPELVSQRRRWLNGSFFAAIHSIVHFGYLYRSSHTFTRKFILHVELVYQTLNMVFAWFALGNYYIAFFVLTQSLNSLGSAWKYVNIPLHYIYIALLLWCFLLSLGNRPAGSKIGYTSSMVGFALITIYMLFAAIFLAVKGIEDVQAEGEITASAVFGNKIFRNIVISLLATYGLYIISSLMALEPWHMITSFFQYLLIAPSYINVLNVYAFCNVHDVSWGTKGSDKVSDDLGAVKSSADNKDEVTVDLPIEQKDINAVYAAELQILGNKAPKEVRVVSDDQKQEDYYKNVRTNVLLVWTMTNGALVAVILQASGGDNSLATTYMGVLLYTVAGLAFFRFLGSSTYLVVRLFAGE.

Pro residues-rich tracts occupy residues 1–11 (MRPGDIYPPPQ) and 26–41 (PPQPQPYPPQPYPPQQ). A disordered region spans residues 1–220 (MRPGDIYPPP…DDDMNDSHPL (220 aa)). Composition is skewed to polar residues over residues 65–78 (MSPTPQEPQGSRYN), 98–107 (LPTQSLSPFN), and 143–160 (TNPSHLPPQQQLTPSYSY). Asn78 is a glycosylation site (N-linked (GlcNAc...) asparagine). Low complexity predominate over residues 176–188 (PHHSSQSSVSSIP). N-linked (GlcNAc...) asparagine glycosylation is found at Asn215, Asn304, Asn473, Asn545, and Asn691. Transmembrane regions (helical) follow at residues 728–748 (TLNMVFAWFALGNYYIAFFVL), 762–782 (VNIPLHYIYIALLLWCFLLSL), 796–816 (SMVGFALITIYMLFAAIFLAV), 842–862 (IVISLLATYGLYIISSLMALE), 870–890 (FFQYLLIAPSYINVLNVYAFC), 972–992 (VLLVWTMTNGALVAVILQASG), and 995–1015 (NSLATTYMGVLLYTVAGLAFF).

The protein belongs to the chitin synthase family.

It is found in the cell membrane. The catalysed reaction is [(1-&gt;4)-N-acetyl-beta-D-glucosaminyl](n) + UDP-N-acetyl-alpha-D-glucosamine = [(1-&gt;4)-N-acetyl-beta-D-glucosaminyl](n+1) + UDP + H(+). Its function is as follows. Polymerizes chitin, a structural polymer of the cell wall and septum, by transferring the sugar moiety of UDP-GlcNAc to the non-reducing end of the growing chitin polymer. The sequence is that of Chitin synthase 8 from Cryptococcus neoformans var. grubii serotype A (strain H99 / ATCC 208821 / CBS 10515 / FGSC 9487) (Filobasidiella neoformans var. grubii).